Consider the following 484-residue polypeptide: UDP-N-acetylmuramate--L-alanine ligase (484 aa).

An ATP-binding site is contributed by 125–131 (GTHGKTT).

Belongs to the MurCDEF family.

Its subcellular location is the cytoplasm. The enzyme catalyses UDP-N-acetyl-alpha-D-muramate + L-alanine + ATP = UDP-N-acetyl-alpha-D-muramoyl-L-alanine + ADP + phosphate + H(+). It functions in the pathway cell wall biogenesis; peptidoglycan biosynthesis. In terms of biological role, cell wall formation. The polypeptide is UDP-N-acetylmuramate--L-alanine ligase (Buchnera aphidicola subsp. Acyrthosiphon pisum (strain Tuc7)).